Reading from the N-terminus, the 483-residue chain is Glycogen synthase (483 aa).

Lys18 lines the ADP-alpha-D-glucose pocket.

The protein belongs to the glycosyltransferase 1 family. Bacterial/plant glycogen synthase subfamily.

It carries out the reaction [(1-&gt;4)-alpha-D-glucosyl](n) + ADP-alpha-D-glucose = [(1-&gt;4)-alpha-D-glucosyl](n+1) + ADP + H(+). It functions in the pathway glycan biosynthesis; glycogen biosynthesis. Functionally, synthesizes alpha-1,4-glucan chains using ADP-glucose. This Rhodopseudomonas palustris (strain ATCC BAA-98 / CGA009) protein is Glycogen synthase.